The primary structure comprises 223 residues: 7-cyano-7-deazaguanine synthase (223 aa).

Met8 to Ala18 is an ATP binding site. Zn(2+) is bound by residues Cys187, Cys195, Cys198, and Cys201.

The protein belongs to the QueC family. Zn(2+) is required as a cofactor.

The catalysed reaction is 7-carboxy-7-deazaguanine + NH4(+) + ATP = 7-cyano-7-deazaguanine + ADP + phosphate + H2O + H(+). Its pathway is purine metabolism; 7-cyano-7-deazaguanine biosynthesis. Functionally, catalyzes the ATP-dependent conversion of 7-carboxy-7-deazaguanine (CDG) to 7-cyano-7-deazaguanine (preQ(0)). This is 7-cyano-7-deazaguanine synthase from Campylobacter curvus (strain 525.92).